Here is a 345-residue protein sequence, read N- to C-terminus: DNA-directed RNA polymerases I and III subunit rpac1 (345 aa).

The segment covering 1-11 (MVNKSTTNGVS) has biased composition (polar residues). The interval 1–20 (MVNKSTTNGVSDPNLENKRT) is disordered.

The protein belongs to the archaeal Rpo3/eukaryotic RPB3 RNA polymerase subunit family. In terms of assembly, component of the RNA polymerase I (Pol I) and RNA polymerase III (Pol III) complexes consisting of at least 13 and 17 subunits, respectively. Interacts with RPAC19/RPAC2.

The protein resides in the nucleus. Its function is as follows. DNA-dependent RNA polymerase catalyzes the transcription of DNA into RNA using the four ribonucleoside triphosphates as substrates. Common component of RNA polymerases I and III which synthesize ribosomal RNA precursors and small RNAs, such as 5S rRNA and tRNAs, respectively. RPAC1 is part of the Pol core element with the central large cleft and probably a clamp element that moves to open and close the cleft. The sequence is that of DNA-directed RNA polymerases I and III subunit rpac1 (polr1c) from Dictyostelium discoideum (Social amoeba).